Reading from the N-terminus, the 68-residue chain is Beta-toxin Im-2 (68 aa).

One can recognise an LCN-type CS-alpha/beta domain in the interval 1–67; the sequence is KDGYPMVRAG…VWTYEKNTCK (67 aa). Cystine bridges form between C15/C66, C19/C40, C26/C47, and C30/C49.

It belongs to the long (4 C-C) scorpion toxin superfamily. Sodium channel inhibitor family. Beta subfamily. Expressed by the venom gland.

The protein localises to the secreted. Beta toxins bind voltage-independently at site-4 of sodium channels (Nav) and shift the voltage of activation toward more negative potentials thereby affecting sodium channel activation and promoting spontaneous and repetitive firing. Is toxic to both insect and mammals. Induces paralysis in Acheta domestica crickets, but does not induce death, whereas intracerebroventricular injection into mice causes immediate death (at a dose of 0.05 ug/g). The protein is Beta-toxin Im-2 of Isometrus maculatus (Lesser brown scorpion).